We begin with the raw amino-acid sequence, 323 residues long: UDP-galactose/UDP-glucose transporter 7 (323 aa).

Residues 1–10 (MEVQAEMEPT) lie on the Cytoplasmic side of the membrane. Residues 11–31 (SSISLVAAVSYGIASMAMVFI) form a helical membrane-spanning segment. At 32 to 35 (NKAV) the chain is on the lumenal side. A helical membrane pass occupies residues 36 to 58 (IMQYPHSMTVLTLQQLATSLLIH). At 59-78 (FGRRMGYTRAKGIDMATAKK) the chain is on the cytoplasmic side. The helical transmembrane segment at 79 to 97 (LLPVSIFYNANVAFALASL) threads the bilayer. Over 98–101 (KGVN) the chain is Lumenal. Residues 102–124 (IPMYIAIKRLTPLAVLISGVLFG) traverse the membrane as a helical segment. Residues 125–132 (KGKPTTQV) lie on the Cytoplasmic side of the membrane. A helical transmembrane segment spans residues 133 to 153 (ALSVLLTAAGCVIAALGDFSF). Position 154 (aspartate 154) is a topological domain, lumenal. Residues 155 to 175 (LFGYGLALTSVFFQTMYLVLV) traverse the membrane as a helical segment. Topologically, residues 176–186 (EKSGAEDGLSS) are cytoplasmic. A helical membrane pass occupies residues 187–207 (IEIMFYNSFLSLPFLSILIIV). The Lumenal segment spans residues 208–226 (TGEFPNSLSLLLAKCSYLP). The helical transmembrane segment at 227–247 (FLVILILSLVMGIVLNFTMFL) threads the bilayer. Over 248–252 (CTIVN) the chain is Cytoplasmic. A helical transmembrane segment spans residues 253 to 275 (SALTTTIVGVLKGVGSTTLGFVL). Residues 276 to 278 (LGG) lie on the Lumenal side of the membrane. The helical transmembrane segment at 279 to 301 (VEVHALNVSGLVVNTAGGVWYSY) threads the bilayer. The Cytoplasmic portion of the chain corresponds to 302–323 (AKYRQKKAKPAKLMSDLEAHKK).

It belongs to the TPT transporter family. UGnT (TC 2.A.7.15) subfamily. Widely expressed with highest expression in roots.

The protein localises to the golgi apparatus membrane. Functionally, nucleotide-sugar transporter that transports UDP-glucose and UDP-galactose. Plays a role in lateral root and root hair development. The chain is UDP-galactose/UDP-glucose transporter 7 from Arabidopsis thaliana (Mouse-ear cress).